The primary structure comprises 255 residues: Protein patched homolog 2 (255 aa).

Over 1-197 the chain is Extracellular; that stretch reads SLLQGGSAYL…LNDIMKSFSD (197 aa). N-linked (GlcNAc...) asparagine glycans are attached at residues asparagine 147 and asparagine 175. Residues 198 to 218 form a helical membrane-spanning segment; it reads VSVIRVAGGYLLMLAYACVTM. The SSD domain maps to 199–255; the sequence is SVIRVAGGYLLMLAYACVTMLRWDCTKSQGAVGLAGVLLVALSVASGLGLCSLLGIS. The Cytoplasmic portion of the chain corresponds to 219-227; the sequence is LRWDCTKSQ. A helical transmembrane segment spans residues 228 to 248; the sequence is GAVGLAGVLLVALSVASGLGL. Residues 249-255 lie on the Extracellular side of the membrane; it reads CSLLGIS.

This sequence belongs to the patched family. In terms of tissue distribution, in the eye, detected in neural retina, iris, retinal pigment epithelium, but not in lens.

The protein resides in the membrane. May act as a receptor for sonic hedgehog (SHH). This chain is Protein patched homolog 2 (PTC2), found in Cynops pyrrhogaster (Japanese fire-bellied newt).